Reading from the N-terminus, the 186-residue chain is Threonylcarbamoyl-AMP synthase (186 aa).

Positions 5–186 (TQSINDAVKC…DAITGEILRL (182 aa)) constitute a YrdC-like domain.

The protein belongs to the SUA5 family. TsaC subfamily.

Its subcellular location is the cytoplasm. The catalysed reaction is L-threonine + hydrogencarbonate + ATP = L-threonylcarbamoyladenylate + diphosphate + H2O. Functionally, required for the formation of a threonylcarbamoyl group on adenosine at position 37 (t(6)A37) in tRNAs that read codons beginning with adenine. Catalyzes the conversion of L-threonine, HCO(3)(-)/CO(2) and ATP to give threonylcarbamoyl-AMP (TC-AMP) as the acyladenylate intermediate, with the release of diphosphate. The sequence is that of Threonylcarbamoyl-AMP synthase from Coxiella burnetii (strain RSA 493 / Nine Mile phase I).